A 710-amino-acid polypeptide reads, in one-letter code: Secretin OutD (710 aa).

An N-terminal signal peptide occupies residues 1 to 27 (MLGKGIKKSWGWLGLTVLLLGSPCGWA). The tract at residues 28–105 (AEFSASFKGT…DNGVLKVIRS (78 aa)) is N0. The N1 stretch occupies residues 123 to 190 (IGDELVTRVV…DIVNTVDKTG (68 aa)). An N2 region spans residues 192 to 262 (REMVTVPLTY…VEMIRQLDRK (71 aa)). Positions 288 to 399 (GNGTSGNRNS…INQLDIRRPQ (112 aa)) are N3. The interval 289–353 (NGTSGNRNSS…AFGSTSSSGG (65 aa)) is disordered. A secretin region spans residues 401–648 (LVEAIIAEIQ…MLFLRPTIIR (248 aa)). Residues 691-710 (TYTFRQVQSSISDFYKPEGR) form a s domain region.

Belongs to the bacterial secretin family. GSP D subfamily. Forms a cylindrical channel with 15 subunits. Interacts with pilotin OutS.

It is found in the cell outer membrane. Its function is as follows. Involved in a type II secretion system (T2SS, formerly general secretion pathway, GSP) for the export of proteins. Required for the translocation of the multiple pectic enzymes. This subunit forms the outer membrane channel. The sequence is that of Secretin OutD (outD) from Dickeya dadantii (strain 3937) (Erwinia chrysanthemi (strain 3937)).